The sequence spans 571 residues: Glutamate--tRNA ligase (571 aa).

The 'HIGH' region signature appears at 110–120; that stretch reads PNPNGPATLGS.

It belongs to the class-I aminoacyl-tRNA synthetase family. Glutamate--tRNA ligase type 2 subfamily.

The protein localises to the cytoplasm. The catalysed reaction is tRNA(Glu) + L-glutamate + ATP = L-glutamyl-tRNA(Glu) + AMP + diphosphate. In terms of biological role, catalyzes the attachment of glutamate to tRNA(Glu) in a two-step reaction: glutamate is first activated by ATP to form Glu-AMP and then transferred to the acceptor end of tRNA(Glu). The chain is Glutamate--tRNA ligase from Methanosarcina mazei (strain ATCC BAA-159 / DSM 3647 / Goe1 / Go1 / JCM 11833 / OCM 88) (Methanosarcina frisia).